A 375-amino-acid chain; its full sequence is B3 domain-containing protein REM-like 2 (375 aa).

3 consecutive DNA-binding regions (TF-B3) follow at residues 51–147 (SFVA…KRLY), 131–226 (FVTV…YGTN), and 277–375 (RLVI…KSGK).

It localises to the nucleus. The polypeptide is B3 domain-containing protein REM-like 2 (Arabidopsis thaliana (Mouse-ear cress)).